Here is a 334-residue protein sequence, read N- to C-terminus: Heme A synthase (334 aa).

The next 5 helical transmembrane spans lie at 6–26, 93–113, 119–139, 154–174, and 189–209; these read ITRW…IGGI, GRIT…QGVI, LPYI…WYMV, LAFH…QLIK, and LIFS…GALV. Histidine 253 is a binding site for heme. 3 helical membrane-spanning segments follow: residues 255-275, 282-302, and 305-325; these read LGGF…FKVK, IAYF…ITIV, and VPII…SIII. A heme-binding site is contributed by histidine 313.

The protein belongs to the COX15/CtaA family. Type 2 subfamily. As to quaternary structure, interacts with CtaB. The cofactor is heme b.

The protein localises to the cell membrane. The catalysed reaction is Fe(II)-heme o + 2 A + H2O = Fe(II)-heme a + 2 AH2. It participates in porphyrin-containing compound metabolism; heme A biosynthesis; heme A from heme O: step 1/1. Functionally, catalyzes the conversion of heme O to heme A by two successive hydroxylations of the methyl group at C8. The first hydroxylation forms heme I, the second hydroxylation results in an unstable dihydroxymethyl group, which spontaneously dehydrates, resulting in the formyl group of heme A. This is Heme A synthase from Rickettsia prowazekii (strain Madrid E).